The following is a 106-amino-acid chain: MGKLTLLLLVLLGWLQYSLWLGKNGIHDFVRVKEDVAAQEANNSTLKARNDQLFAEIDDLNGGQEAIEERARNELGMIKPGESFYRLVPDQSRRNAGTPSTQNNAQ.

Over 1–3 the chain is Cytoplasmic; the sequence is MGK. Residues 4–21 traverse the membrane as a helical segment; the sequence is LTLLLLVLLGWLQYSLWL. The Periplasmic portion of the chain corresponds to 22–106; the sequence is GKNGIHDFVR…GTPSTQNNAQ (85 aa). Residues 31-62 are a coiled coil; sequence RVKEDVAAQEANNSTLKARNDQLFAEIDDLNG.

Belongs to the FtsB family. As to quaternary structure, part of a complex composed of FtsB, FtsL and FtsQ.

It is found in the cell inner membrane. Functionally, essential cell division protein. May link together the upstream cell division proteins, which are predominantly cytoplasmic, with the downstream cell division proteins, which are predominantly periplasmic. The sequence is that of Cell division protein FtsB from Yersinia pseudotuberculosis serotype O:1b (strain IP 31758).